Consider the following 568-residue polypeptide: Acetyl-coenzyme A carboxylase carboxyl transferase subunits beta/alpha (568 aa).

Residues 1-253 form an acetyl-coenzyme A carboxylase carboxyl transferase subunit beta region; that stretch reads MAEPARTLAQ…QTAEYLRDAG (253 aa). Residues 21–290 enclose the CoA carboxyltransferase N-terminal domain; that stretch reads RWTRCPNCRS…APAAERGYRT (270 aa). The carboxyltransferase stretch occupies residues 21–536; that stretch reads RWTRCPNCRS…AAALRASIGE (516 aa). Zn(2+)-binding residues include Cys-25, Cys-28, Cys-44, and Cys-47. The C4-type zinc finger occupies 25–47; the sequence is CPNCRSLVYLRRLRRNGHVCPDC. The acetyl-coenzyme A carboxylase carboxyl transferase subunit alpha stretch occupies residues 254-559; sequence MVDLVVPRHE…RRRFDRFGDP (306 aa). The 251-residue stretch at 286 to 536 folds into the CoA carboxyltransferase C-terminal domain; that stretch reads RGYRTRPRPA…AAALRASIGE (251 aa).

It in the N-terminal section; belongs to the AccD/PCCB family. This sequence in the C-terminal section; belongs to the AccA family. Acetyl-CoA carboxylase is a heterotetramer composed of biotin carboxyl carrier protein (AccB), biotin carboxylase (AccC) and two subunits of ACCase subunit beta/alpha. Zn(2+) serves as cofactor.

It localises to the cytoplasm. The catalysed reaction is N(6)-carboxybiotinyl-L-lysyl-[protein] + acetyl-CoA = N(6)-biotinyl-L-lysyl-[protein] + malonyl-CoA. The protein operates within lipid metabolism; malonyl-CoA biosynthesis; malonyl-CoA from acetyl-CoA: step 1/1. Component of the acetyl coenzyme A carboxylase (ACC) complex. Biotin carboxylase (BC) catalyzes the carboxylation of biotin on its carrier protein (BCCP) and then the CO(2) group is transferred by the transcarboxylase to acetyl-CoA to form malonyl-CoA. The polypeptide is Acetyl-coenzyme A carboxylase carboxyl transferase subunits beta/alpha (accD) (Saccharopolyspora erythraea (strain ATCC 11635 / DSM 40517 / JCM 4748 / NBRC 13426 / NCIMB 8594 / NRRL 2338)).